We begin with the raw amino-acid sequence, 583 residues long: 1-deoxy-D-xylulose-5-phosphate synthase (583 aa).

Thiamine diphosphate contacts are provided by residues histidine 74 and 115 to 117; that span reads GHS. Residue aspartate 146 coordinates Mg(2+). Thiamine diphosphate contacts are provided by residues 147-148, asparagine 175, phenylalanine 244, and glutamate 327; that span reads GG. Asparagine 175 provides a ligand contact to Mg(2+).

Belongs to the transketolase family. DXPS subfamily. As to quaternary structure, homodimer. It depends on Mg(2+) as a cofactor. Thiamine diphosphate serves as cofactor.

It carries out the reaction D-glyceraldehyde 3-phosphate + pyruvate + H(+) = 1-deoxy-D-xylulose 5-phosphate + CO2. It participates in metabolic intermediate biosynthesis; 1-deoxy-D-xylulose 5-phosphate biosynthesis; 1-deoxy-D-xylulose 5-phosphate from D-glyceraldehyde 3-phosphate and pyruvate: step 1/1. Functionally, catalyzes the acyloin condensation reaction between C atoms 2 and 3 of pyruvate and glyceraldehyde 3-phosphate to yield 1-deoxy-D-xylulose-5-phosphate (DXP). This chain is 1-deoxy-D-xylulose-5-phosphate synthase, found in Myxococcus xanthus (strain DK1622).